A 256-amino-acid chain; its full sequence is Glycerol-3-phosphate acyltransferase (256 aa).

A run of 6 helical transmembrane segments spans residues 2 to 22 (FPYL…SVLW), 58 to 78 (LAVA…AIGL), 90 to 110 (SYFI…WFKF), 123 to 143 (LIVV…IFAF), 153 to 173 (IIGT…GVMG), and 211 to 231 (FADG…ILVV).

Belongs to the PlsY family. In terms of assembly, probably interacts with PlsX.

The protein resides in the cell membrane. The catalysed reaction is an acyl phosphate + sn-glycerol 3-phosphate = a 1-acyl-sn-glycero-3-phosphate + phosphate. It participates in lipid metabolism; phospholipid metabolism. Functionally, catalyzes the transfer of an acyl group from acyl-phosphate (acyl-PO(4)) to glycerol-3-phosphate (G3P) to form lysophosphatidic acid (LPA). This enzyme utilizes acyl-phosphate as fatty acyl donor, but not acyl-CoA or acyl-ACP. This Mesoplasma florum (strain ATCC 33453 / NBRC 100688 / NCTC 11704 / L1) (Acholeplasma florum) protein is Glycerol-3-phosphate acyltransferase.